We begin with the raw amino-acid sequence, 388 residues long: Chorismate synthase (388 aa).

NADP(+)-binding residues include arginine 39 and arginine 45. FMN is bound by residues 130-132 (RSS), 251-252 (NA), glycine 296, 311-315 (KPIPT), and arginine 337.

This sequence belongs to the chorismate synthase family. In terms of assembly, homotetramer. FMNH2 serves as cofactor.

The enzyme catalyses 5-O-(1-carboxyvinyl)-3-phosphoshikimate = chorismate + phosphate. Its pathway is metabolic intermediate biosynthesis; chorismate biosynthesis; chorismate from D-erythrose 4-phosphate and phosphoenolpyruvate: step 7/7. Catalyzes the anti-1,4-elimination of the C-3 phosphate and the C-6 proR hydrogen from 5-enolpyruvylshikimate-3-phosphate (EPSP) to yield chorismate, which is the branch point compound that serves as the starting substrate for the three terminal pathways of aromatic amino acid biosynthesis. This reaction introduces a second double bond into the aromatic ring system. The polypeptide is Chorismate synthase (Lactococcus lactis subsp. cremoris (strain SK11)).